The sequence spans 438 residues: Plasmalemma vesicle-associated protein (438 aa).

Residues 1–26 are Cytoplasmic-facing; sequence MGLSMDRSPYARTGDQQRGCWYYLRY. Residues 27-47 traverse the membrane as a helical; Signal-anchor for type II membrane protein segment; that stretch reads FFLFVSLIQFLIILGLVLFMI. Topologically, residues 48-438 are extracellular; that stretch reads YGNVHATTES…VVNPAAQPSG (391 aa). N-linked (GlcNAc...) asparagine glycans are attached at residues N82, N88, N112, and N150. Coiled-coil stretches lie at residues 140–160, 189–224, and 281–383; these read KQCQ…LFKL, KRQT…QSLC, and EELA…ISAL. The interval 391 to 413 is disordered; that stretch reads SLPAVPPRVSGPPPNPPPIDPAS. Residues 394–410 are compositionally biased toward pro residues; that stretch reads AVPPRVSGPPPNPPPID.

Homodimer. As to expression, expressed in lung, kidney, spleen, heart, muscle, eye, pancreas, thyroid, thymus, submaxillary gland, prostate, epididymis, uterus and liver.

Its subcellular location is the cell membrane. It is found in the membrane. The protein localises to the caveola. It localises to the cytoplasm. The protein resides in the perinuclear region. Endothelial cell-specific membrane protein involved in the formation of the diaphragms that bridge endothelial fenestrae. It is also required for the formation of stomata of caveolae and transendothelial channels. Functions in microvascular permeability, endothelial fenestrae contributing to the passage of water and solutes and regulating transcellular versus paracellular flow in different organs. Plays a specific role in embryonic development. The chain is Plasmalemma vesicle-associated protein (Plvap) from Mus musculus (Mouse).